A 602-amino-acid chain; its full sequence is DEAD-box ATP-dependent RNA helicase 53 (602 aa).

The span at 33 to 43 shows a compositional bias: low complexity; it reads ASPLDPCRGPA. The tract at residues 33 to 76 is disordered; the sequence is ASPLDPCRGPAAPEPPRRRAFHGSPSPLGFRSTPASWSSPEAGA. A Q motif motif is present at residues 84–112; sequence LEVARLGISPWIVERLAARGITRLFPIQR. A Helicase ATP-binding domain is found at 115–288; sequence LDPAMQGKDM…SKYLKDPIII (174 aa). 128 to 135 serves as a coordination point for ATP; sequence ARTGTGKT. The DEAD box motif lies at 236–239; the sequence is DEAD. One can recognise a Helicase C-terminal domain in the interval 317 to 462; the sequence is ILGPLIKEHA…LPKIEVADEA (146 aa). The interval 503–602 is disordered; sequence FGDFDGFGSS…GRSGGFDDSN (100 aa).

This sequence belongs to the DEAD box helicase family. DDX21/DDX50 subfamily.

It carries out the reaction ATP + H2O = ADP + phosphate + H(+). The chain is DEAD-box ATP-dependent RNA helicase 53 from Oryza sativa subsp. japonica (Rice).